Here is a 162-residue protein sequence, read N- to C-terminus: CD-NTase-associated protein 7 (162 aa).

The segment at 138–162 is disordered; it reads HSGLTQSGGREYSSNGYGMQRKDYN. Over residues 139-154 the composition is skewed to polar residues; sequence SGLTQSGGREYSSNGY.

This sequence belongs to the HORMA family. HORMA1 subfamily. As to quaternary structure, forms complexes with CdnC with 1:1 and 2:2 stoichimetry, and a 1:1:6 CdnC:Cap7:Cap6 complex.

Its function is as follows. Sensor protein of a CBASS antivirus system. CBASS (cyclic oligonucleotide-based antiphage signaling system) provides immunity against bacteriophage. The CD-NTase protein synthesizes cyclic nucleotides in response to infection; these serve as specific second messenger signals. The signals activate a diverse range of effectors, leading to bacterial cell death and thus abortive phage infection. A type III CBASS system. Expression of this CBASS system (Cap18-Cap6-Cap7-CdnC-CapW-Cap17) in a susceptible E.coli (strain MG1655) confers resistance to bacteriophage P1. The sensor protein for this CBASS system. Binds to a closure peptide, which allows it to activate CdnC for second messenger synthesis. The protein is CD-NTase-associated protein 7 of Escherichia coli (strain KTE188).